Reading from the N-terminus, the 495-residue chain is Cobyric acid synthase (495 aa).

Residues 249–442 form the GATase cobBQ-type domain; that stretch reads KFIVKVPVVT…LHGVFDEPEA (194 aa). Catalysis depends on Cys-330, which acts as the Nucleophile. The active site involves His-434.

The protein belongs to the CobB/CobQ family. CobQ subfamily.

Its pathway is cofactor biosynthesis; adenosylcobalamin biosynthesis. Its function is as follows. Catalyzes amidations at positions B, D, E, and G on adenosylcobyrinic A,C-diamide. NH(2) groups are provided by glutamine, and one molecule of ATP is hydrogenolyzed for each amidation. The protein is Cobyric acid synthase of Aliivibrio fischeri (strain ATCC 700601 / ES114) (Vibrio fischeri).